The primary structure comprises 89 residues: Small ribosomal subunit protein uS15 (89 aa).

Belongs to the universal ribosomal protein uS15 family. In terms of assembly, part of the 30S ribosomal subunit. Forms a bridge to the 50S subunit in the 70S ribosome, contacting the 23S rRNA.

Its function is as follows. One of the primary rRNA binding proteins, it binds directly to 16S rRNA where it helps nucleate assembly of the platform of the 30S subunit by binding and bridging several RNA helices of the 16S rRNA. In terms of biological role, forms an intersubunit bridge (bridge B4) with the 23S rRNA of the 50S subunit in the ribosome. This is Small ribosomal subunit protein uS15 from Vibrio cholerae serotype O1 (strain ATCC 39541 / Classical Ogawa 395 / O395).